The chain runs to 473 residues: High-affinity proline transporter PutP (473 aa).

Helical transmembrane passes span 32–52, 56–76, 114–134, 146–166, 171–191, 218–238, 256–276, 299–319, 350–370, 376–396, 408–428, and 431–451; these read LSAG…GAMF, LSGA…WLYV, IVIL…GGVL, GLWI…FLAV, FVQG…TFFH, VLGI…PHII, IGMG…LGGI, ILFH…AIMS, LVFL…VLAW, ILGL…PVVL, GALA…NAGL, and FLYE…FVSI.

This sequence belongs to the sodium:solute symporter (SSF) (TC 2.A.21) family.

The protein localises to the cell membrane. The catalysed reaction is L-proline(in) + Na(+)(in) = L-proline(out) + Na(+)(out). Its function is as follows. Catalyzes the high-affinity uptake of extracellular proline. Important for the use of proline as a sole carbon and energy source or a sole nitrogen source. The polypeptide is High-affinity proline transporter PutP (Bacillus subtilis (strain 168)).